The primary structure comprises 381 residues: D-rhamnosyltransferase WbpZ (381 aa).

The substrate site is built by glutamate 19, histidine 116, lysine 206, and valine 252.

The protein belongs to the glycosyltransferase group 1 family. Glycosyltransferase 4 subfamily.

The protein localises to the cytoplasm. It catalyses the reaction GDP-alpha-D-rhamnose + N-acetyl-alpha-D-glucosaminyl-di-trans,octa-cis-undecaprenyl diphosphate = alpha-D-rhamnosyl-(1-&gt;3)-N-acetyl-alpha-D-glucosaminyl-1-diphospho-di-trans,octa-cis-undecaprenol + GDP + H(+). The catalysed reaction is GDP-alpha-D-rhamnose + N-acetyl-alpha-D-galactosaminyl-di-trans,octa-cis-undecaprenyl diphosphate = alpha-D-rhamnosyl-(1-&gt;3)-N-acetyl-alpha-D-galactosaminyl-1-diphospho-di-trans,octa-cis-undecaprenol + GDP + H(+). The enzyme catalyses N-acetyl-alpha-D-glucosaminyl-di-trans,octa-cis-undecaprenyl diphosphate + GDP-alpha-D-mannose = alpha-D-mannosyl-(1-&gt;3)-N-acetyl-alpha-D-glucosaminyl-di-trans,octa-cis-undecaprenyl diphosphate + GDP + H(+). It carries out the reaction N-acetyl-alpha-D-galactosaminyl-di-trans,octa-cis-undecaprenyl diphosphate + GDP-alpha-D-mannose = alpha-D-mannosyl-(1-&gt;3)-N-acetyl-alpha-D-galctosaminyl-1-diphospho-di-trans,octa-cis-undecaprenol + GDP + H(+). It participates in lipopolysaccharide biosynthesis; LPS oligosaccharide biosynthesis. Not activated by dithiothreitol (DTT) using GlcNAc-alpha-PO(3)-PO(3)-phenylundecyl (GlcNAc-PP-PhU) as acceptor substrate. 0.25% Triton X-100 and 0.125% NP-40 increases the activity 2.5-fold and 2-fold, respectively. 0.125% octyl glucoside has little effect on activity. Slightly increased activity with Mg(2+) and Pb(2+), while no effect with Mn(2+), Co(2+), Ni(2+), Cu(2+), Zn(2+), Ca(2+) or EDTA. Not inhibited by N-butyryl-galactosamine-alpha-benzyl or N-butyryl-glucosamine-beta-benzyl. Bis-imidazolium salts having aliphatic spacer groups with 4 or 6 carbons have little effect on activity, but spacer groups of 18-22 aliphatic carbons inhibit activity, with the most potent inhibitor being bis-imidazolium salt having a 20-carbon chain spacer length. Functionally, non-processive alpha-1,3-D-rhamnosyltransferase. Catalyzes the transfer of one D-rhamnose (D-Rha) residue from donor substrate GDP-D-Rha in alpha-1-3 linkage to both GlcNAc- and GalNAc-diphosphate-lipid acceptor substrates. Is also able to transfer D-mannose (D-Man) to these acceptors at a lower level. Nucleotide sugars GDP-D-Rha, GDP-Fuc, UDP-Gal, UDP-GalNAc, UDP-GlcNAc and CMP-sialic acid cannot act as donor substrates. Only compounds with a diphosphate as the aglycone group can act as acceptor substrates. No activity is detected with compounds containing a diphosphate mimic. Fluorescent undecyl-anthracenyl group-containing compounds, such as GlcNAc-PO(3)-PO(3)-AnthrU and GalNAc-PO(3)-PO(3)-AnthrU, are also good acceptor substrates. Involved in the biosynthesis of the common polysaccharide antigen (CPA), also called A band, which is one of the two major cell surface O-antigens of the P.aeruginosa lipopolysaccharide. Involved in susceptibility to antibiotic colistin. This is D-rhamnosyltransferase WbpZ from Pseudomonas aeruginosa (strain ATCC 15692 / DSM 22644 / CIP 104116 / JCM 14847 / LMG 12228 / 1C / PRS 101 / PAO1).